A 379-amino-acid chain; its full sequence is Cobalt-precorrin-5B C(1)-methyltransferase (379 aa).

It belongs to the CbiD family.

It catalyses the reaction Co-precorrin-5B + S-adenosyl-L-methionine = Co-precorrin-6A + S-adenosyl-L-homocysteine. It functions in the pathway cofactor biosynthesis; adenosylcobalamin biosynthesis; cob(II)yrinate a,c-diamide from sirohydrochlorin (anaerobic route): step 6/10. Its function is as follows. Catalyzes the methylation of C-1 in cobalt-precorrin-5B to form cobalt-precorrin-6A. The sequence is that of Cobalt-precorrin-5B C(1)-methyltransferase from Edwardsiella ictaluri (strain 93-146).